A 134-amino-acid polypeptide reads, in one-letter code: ATP synthase epsilon chain (134 aa).

It belongs to the ATPase epsilon chain family. F-type ATPases have 2 components, CF(1) - the catalytic core - and CF(0) - the membrane proton channel. CF(1) has five subunits: alpha(3), beta(3), gamma(1), delta(1), epsilon(1). CF(0) has three main subunits: a, b and c.

The protein resides in the cell membrane. Functionally, produces ATP from ADP in the presence of a proton gradient across the membrane. The polypeptide is ATP synthase epsilon chain (Carboxydothermus hydrogenoformans (strain ATCC BAA-161 / DSM 6008 / Z-2901)).